We begin with the raw amino-acid sequence, 58 residues long: Large ribosomal subunit protein uL30 (58 aa).

Belongs to the universal ribosomal protein uL30 family. As to quaternary structure, part of the 50S ribosomal subunit.

This is Large ribosomal subunit protein uL30 from Pseudomonas savastanoi pv. phaseolicola (strain 1448A / Race 6) (Pseudomonas syringae pv. phaseolicola (strain 1448A / Race 6)).